The primary structure comprises 519 residues: Zinc finger protein 692 (519 aa).

Residues 123–314 are disordered; the sequence is GPSLSPTPSE…PAWDEDTAQI (192 aa). Polar residues predominate over residues 145 to 155; the sequence is RSWCSEATSGQ. The residue at position 162 (Ser162) is a Phosphoserine. Over residues 164–173 the composition is skewed to basic and acidic residues; the sequence is HDERTQEARL. Positions 177-187 are enriched in pro residues; that stretch reads VGPPPETFPPP. Residues 188-206 show a composition bias toward acidic residues; it reads GEEEGEEEEDNDEDEEEML. Position 231 is a phosphoserine (Ser231). Residues 247–266 are compositionally biased toward low complexity; it reads AALSSPLAVPALSASSLSSR. Positions 277 to 303 are enriched in polar residues; it reads PQLSRTPQAAQQTEALASTGSQAQSAP. 5 C2H2-type zinc fingers span residues 328–353, 359–383, 389–411, 417–439, and 448–471; these read MPCD…KYQH, FSCP…MKLH, YICE…RRIH, LQCE…QRKH, and FPCE…SKSH. A disordered region spans residues 469–519; it reads KSHPALLLAPQESPSGPLEPCPSISAPGPLGSSEGSRPSASPQAPTLLPQQ. Position 470 is a phosphoserine; by AMPK (Ser470). Positions 501-519 are enriched in polar residues; the sequence is SEGSRPSASPQAPTLLPQQ.

Belongs to the krueppel C2H2-type zinc-finger protein family. In terms of processing, phosphorylation at Ser-470 results in loss of DNA-binding activity. As to expression, ubiquitous. Highly expressed in brain, thymus and spleen.

The protein localises to the nucleus. May act as an transcriptional repressor for PCK1 gene expression, in turn may participate in the hepatic gluconeogenesis regulation through the activated AMPK signaling pathway. In Homo sapiens (Human), this protein is Zinc finger protein 692 (ZNF692).